A 345-amino-acid polypeptide reads, in one-letter code: DQNGKVVNEKMEPKLPKETLLKMYKTAVLGRNADIKALQYQRQGRMLTYAPNMGQEAAQIGMAAAMEPQDWNSPMYRELNTLLYRGDKLENVFLYWYGNERGSIKPEGVKILPTNIIIGSQSNIAAGLAMASKIRKTNEVTAFTIGDGGTAHGEFYEGLNFAASFKAPVVAVIQNNQWAISTPVRKASNSETLAQKGVAFGIPYIQVDGNDMLAMYVASKEAMDRARKGDGPTLIEAFTYRMGPHTTSDDPCSIYRTKEEENEWAKKDQIARFKTYLINKGYWSEEEDKKLEEEVLAEINDTFKKVESYGANVELIEIFEHTYAEMTPQLKEQYEEHKKYLEGVK.

As to quaternary structure, heterodimer of an alpha and a beta chain. Thiamine diphosphate is required as a cofactor.

The enzyme catalyses N(6)-[(R)-lipoyl]-L-lysyl-[protein] + pyruvate + H(+) = N(6)-[(R)-S(8)-acetyldihydrolipoyl]-L-lysyl-[protein] + CO2. The pyruvate dehydrogenase complex catalyzes the overall conversion of pyruvate to acetyl-CoA and CO(2). It contains multiple copies of three enzymatic components: pyruvate dehydrogenase (E1), dihydrolipoamide acetyltransferase (E2) and lipoamide dehydrogenase (E3). The protein is Pyruvate dehydrogenase E1 component subunit alpha (pdhA) of Acholeplasma laidlawii.